The sequence spans 339 residues: Sphingolipid long chain base-responsive protein PIL1 (339 aa).

A compositionally biased stretch (polar residues) spans 1 to 19; the sequence is MHRTYSLRNSRAPTASQLQ. Residues 1–31 are disordered; it reads MHRTYSLRNSRAPTASQLQNPPPPPSTTKGR. Phosphothreonine is present on T14. S16 is subject to Phosphoserine. K29 is covalently cross-linked (Glycyl lysine isopeptide (Lys-Gly) (interchain with G-Cter in ubiquitin)). 4 positions are modified to phosphoserine: S45, S98, S163, and S230. T233 bears the Phosphothreonine mark. Residues 273–339 are disordered; it reads SFKQDYEDFE…SESLPQQTTA (67 aa). Residues 279–293 show a composition bias toward acidic residues; sequence EDFEPEEGEEEEEED. The residue at position 299 (S299) is a Phosphoserine. The segment covering 301–318 has biased composition (acidic residues); that stretch reads DEQEDGQIEEPEQEEEGA. The segment covering 326-339 has biased composition (polar residues); it reads GHQQSESLPQQTTA.

Post-translationally, phosphorylated by PKH1 and PKH2. Phosphorylation is inhibited by sphingolipid long chain bases (LCBs).

It is found in the lipid droplet. Its function is as follows. Negative regulator of cell wall integrity (CWI) in unstressed cells, probably by inhibiting protein kinase PKH1/PHK2 activity and regulating their downstream CWI pathways PKC1-MAP kinase pathway and protein kinase YPK1 pathway. Activity may be regulated by the transient increase of sphingolipid long chain bases (LCBs) during heat stress. This is Sphingolipid long chain base-responsive protein PIL1 (PIL1) from Saccharomyces cerevisiae (strain ATCC 204508 / S288c) (Baker's yeast).